The sequence spans 281 residues: uncharacterized protein (281 aa).

This is an uncharacterized protein from Methanocaldococcus jannaschii (strain ATCC 43067 / DSM 2661 / JAL-1 / JCM 10045 / NBRC 100440) (Methanococcus jannaschii).